The chain runs to 300 residues: Acetylglutamate kinase (300 aa).

Residues G73–G74, R95, and N197 each bind substrate.

It belongs to the acetylglutamate kinase family. ArgB subfamily.

The protein resides in the cytoplasm. It catalyses the reaction N-acetyl-L-glutamate + ATP = N-acetyl-L-glutamyl 5-phosphate + ADP. It functions in the pathway amino-acid biosynthesis; L-arginine biosynthesis; N(2)-acetyl-L-ornithine from L-glutamate: step 2/4. Functionally, catalyzes the ATP-dependent phosphorylation of N-acetyl-L-glutamate. This chain is Acetylglutamate kinase, found in Bordetella pertussis (strain Tohama I / ATCC BAA-589 / NCTC 13251).